The following is a 629-amino-acid chain: RNA polymerase sigma factor RpoD (629 aa).

Residues 183–228 (HNGLDEDFSDEDDEEESSNADVEDNEDEEDNESESTSDSSDSDNSI) form a disordered region. A compositionally biased stretch (acidic residues) spans 187-228 (DEDFSDEDDEEESSNADVEDNEDEEDNESESTSDSSDSDNSI). Positions 395–465 (MVEANLRLVI…TRSIADQART (71 aa)) are sigma-70 factor domain-2. The Interaction with polymerase core subunit RpoC signature appears at 419–422 (DLIQ). Positions 474–550 (ETINKLNRIS…DSTLELPLDS (77 aa)) are sigma-70 factor domain-3. Residues 563–616 (VLEGLTPREAKVLRMRFGIDMNTDHTLEEVGKQFDVTRERIRQIEAKALRKLRH) form a sigma-70 factor domain-4 region. The segment at residues 589-608 (LEEVGKQFDVTRERIRQIEA) is a DNA-binding region (H-T-H motif).

It belongs to the sigma-70 factor family. RpoD/SigA subfamily. Interacts transiently with the RNA polymerase catalytic core.

The protein resides in the cytoplasm. Its function is as follows. Sigma factors are initiation factors that promote the attachment of RNA polymerase to specific initiation sites and are then released. This sigma factor is the primary sigma factor during exponential growth. The protein is RNA polymerase sigma factor RpoD of Haemophilus influenzae (strain ATCC 51907 / DSM 11121 / KW20 / Rd).